Consider the following 1380-residue polypeptide: Carboxypeptidase D (1380 aa).

The signal sequence occupies residues 1 to 31 (MASGRDERPPWRLGRLLLLMCLLLLGSSARA). Residues 32–1299 (AHIKKAEATT…DNRIFGLPRE (1268 aa)) lie on the Extracellular side of the membrane. The Peptidase M14 1 domain occupies 57–380 (RYYHEEELES…ESLITLIEKV (324 aa)). Zn(2+)-binding residues include histidine 139 and glutamate 142. Positions 162–164 (RGD) match the Cell attachment site motif. Asparagine 172 carries an N-linked (GlcNAc...) asparagine glycan. A disordered region spans residues 190–232 (AREGDCGFGDGGPSGASGRDNSRGRDLNRSFPDQFSTGEPPAL). Residues 195–204 (CGFGDGGPSG) are compositionally biased toward gly residues. Residue asparagine 217 is glycosylated (N-linked (GlcNAc...) asparagine). Histidine 257 serves as a coordination point for Zn(2+). Tyrosine 265 is subject to Phosphotyrosine. Serine 270 is modified (phosphoserine). Residue glutamate 350 is the Proton donor/acceptor of the active site. N-linked (GlcNAc...) asparagine glycosylation is found at asparagine 399, asparagine 410, asparagine 429, and asparagine 522. One can recognise a Peptidase M14 2 domain in the interval 502 to 792 (HHHHFPDMEI…RSLIQFMKQV (291 aa)). Zn(2+) is bound by residues histidine 564 and glutamate 567. Asparagine 626 carries N-linked (GlcNAc...) asparagine glycosylation. Position 671 (histidine 671) interacts with Zn(2+). Glutamate 762 functions as the Proton donor/acceptor in the catalytic mechanism. N-linked (GlcNAc...) asparagine glycosylation is found at asparagine 811, asparagine 855, asparagine 867, and asparagine 879. The segment at 874–899 (STDSNNESKKGKGASSSTNDASDPTT) is disordered. Over residues 887–897 (ASSSTNDASDP) the composition is skewed to polar residues. Residues 932 to 1211 (RYHSYKDLSE…RSLLSMLVEV (280 aa)) enclose the Peptidase M14 3 domain. N-linked (GlcNAc...) asparagine glycans are attached at residues asparagine 955, asparagine 978, asparagine 1070, and asparagine 1142. Residues 1300-1320 (LVVTVSGATMSALILTACIIW) form a helical membrane-spanning segment. S-palmitoyl cysteine attachment occurs at residues cysteine 1317, cysteine 1321, and cysteine 1323. The Cytoplasmic portion of the chain corresponds to 1321–1380 (CICSIKSNRHKDGFHRLRQHHDEYEDEIRMMSTGSKKSLLSHEFQDETDTEEETLYSSKH). A phosphoserine mark is found at serine 1358 and serine 1361. A disordered region spans residues 1359 to 1380 (LLSHEFQDETDTEEETLYSSKH). A phosphothreonine mark is found at threonine 1368 and threonine 1370.

This sequence belongs to the peptidase M14 family. Requires Zn(2+) as cofactor. As to expression, highly expressed in placenta, pancreas and hepatoma cells. Lower levels found in skeletal muscle, heart and colon carcinoma and melanoma cell lines.

Its subcellular location is the cell membrane. The catalysed reaction is Releases C-terminal Arg and Lys from polypeptides.. This Homo sapiens (Human) protein is Carboxypeptidase D (CPD).